The primary structure comprises 384 residues: Anhydro-N-acetylmuramic acid kinase (384 aa).

9–16 (GTSVDGID) serves as a coordination point for ATP.

This sequence belongs to the anhydro-N-acetylmuramic acid kinase family.

The catalysed reaction is 1,6-anhydro-N-acetyl-beta-muramate + ATP + H2O = N-acetyl-D-muramate 6-phosphate + ADP + H(+). The protein operates within amino-sugar metabolism; 1,6-anhydro-N-acetylmuramate degradation. It functions in the pathway cell wall biogenesis; peptidoglycan recycling. In terms of biological role, catalyzes the specific phosphorylation of 1,6-anhydro-N-acetylmuramic acid (anhMurNAc) with the simultaneous cleavage of the 1,6-anhydro ring, generating MurNAc-6-P. Is required for the utilization of anhMurNAc either imported from the medium or derived from its own cell wall murein, and thus plays a role in cell wall recycling. This Rippkaea orientalis (strain PCC 8801 / RF-1) (Cyanothece sp. (strain PCC 8801)) protein is Anhydro-N-acetylmuramic acid kinase.